The sequence spans 433 residues: FAD-dependent monooxygenase notI' (433 aa).

FAD contacts are provided by glutamate 45 and arginine 117. Arginine 195 is an active-site residue. Residues aspartate 314 and alanine 327 each coordinate FAD.

Belongs to the paxM FAD-dependent monooxygenase family. FAD is required as a cofactor.

It functions in the pathway alkaloid biosynthesis. Functionally, FAD-dependent monooxygenase; part of the gene cluster that mediates the biosynthesis of notoamide, a fungal indole alkaloid that belongs to a family of natural products containing a characteristic bicyclo[2.2.2]diazaoctane core. The first step of notoamide biosynthesis involves coupling of L-proline and L-tryptophan by the bimodular NRPS notE', to produce cyclo-L-tryptophan-L-proline called brevianamide F. The reverse prenyltransferase notF' then acts as a deoxybrevianamide E synthase and converts brevianamide F to deoxybrevianamide E via reverse prenylation at C-2 of the indole ring leading to the bicyclo[2.2.2]diazaoctane core. Deoxybrevianamide E is further hydroxylated at C-6 of the indole ring, likely catalyzed by the cytochrome P450 monooxygenase notG', to yield 6-hydroxy-deoxybrevianamide E. 6-hydroxy-deoxybrevianamide E is a specific substrate of the prenyltransferase notC' for normal prenylation at C-7 to produce 6-hydroxy-7-prenyl-deoxybrevianamide, also called notoamide S. As the proposed pivotal branching point in notoamide biosynthesis, notoamide S can be diverted to notoamide E through an oxidative pyran ring closure putatively catalyzed by either notH' cytochrome P450 monooxygenase or the notD' FAD-linked oxidoreductase. This step would be followed by an indole 2,3-epoxidation-initiated pinacol-like rearrangement catalyzed by the notB' FAD-dependent monooxygenase leading to the formation of notoamide C and notoamide D. On the other hand notoamide S is converted to notoamide T by notH' (or notD'), a bifunctional oxidase that also functions as the intramolecular Diels-Alderase responsible for generation of (-)-notoamide T. To generate antipodal (+)-notoaminide T, notH (or notD) in Aspergillus strain MF297-2 is expected to catalyze a Diels-Alder reaction leading to the opposite stereochemistry. The remaining oxidoreductase notD' (or notH') likely catalyzes the oxidative pyran ring formation to yield (-)-stephacidin A. The FAD-dependent monooxygenase notI' is highly similar to notB' and is predicted to catalyze a similar conversion from (-)-stephacidin A to (+)-notoamide B via the 2,3-epoxidation of (-)-stephacidin A followed by a pinacol-type rearrangement. Finally, it remains unclear which enzyme could be responsible for the final hydroxylation steps leading to notoamide A and sclerotiamide. This is FAD-dependent monooxygenase notI' from Aspergillus versicolor.